The chain runs to 150 residues: Transcriptional repressor NrdR (150 aa).

Positions 1–22 are disordered; sequence MKCPYCSAPDSRVVNSRPSDDG. A zinc finger spans residues 3-34; that stretch reads CPYCSAPDSRVVNSRPSDDGASIRRRRECLRC. In terms of domain architecture, ATP-cone spans 49 to 136; the sequence is LMVLKRGGQR…VYRDFDSLER (88 aa).

Belongs to the NrdR family. It depends on Zn(2+) as a cofactor.

Functionally, negatively regulates transcription of bacterial ribonucleotide reductase nrd genes and operons by binding to NrdR-boxes. This is Transcriptional repressor NrdR from Deinococcus geothermalis (strain DSM 11300 / CIP 105573 / AG-3a).